The following is a 94-amino-acid chain: Large ribosomal subunit protein eL42 (94 aa).

Residues C11, C14, C71, and C74 each coordinate Zn(2+). Residues 11-74 form a C4-type zinc finger; the sequence is CPYCKRHTIH…LDLRFVCTVC (64 aa).

Belongs to the eukaryotic ribosomal protein eL42 family. Part of the 50S ribosomal subunit. The cofactor is Zn(2+).

In terms of biological role, binds to the 23S rRNA. The polypeptide is Large ribosomal subunit protein eL42 (Pyrococcus horikoshii (strain ATCC 700860 / DSM 12428 / JCM 9974 / NBRC 100139 / OT-3)).